The chain runs to 182 residues: Large ribosomal subunit protein bL25 (182 aa).

Belongs to the bacterial ribosomal protein bL25 family. CTC subfamily. In terms of assembly, part of the 50S ribosomal subunit; part of the 5S rRNA/L5/L18/L25 subcomplex. Contacts the 5S rRNA. Binds to the 5S rRNA independently of L5 and L18.

In terms of biological role, this is one of the proteins that binds to the 5S RNA in the ribosome where it forms part of the central protuberance. This chain is Large ribosomal subunit protein bL25, found in Borrelia garinii subsp. bavariensis (strain ATCC BAA-2496 / DSM 23469 / PBi) (Borreliella bavariensis).